Here is a 283-residue protein sequence, read N- to C-terminus: 1-acyl-sn-glycerol-3-phosphate acyltransferase alpha (283 aa).

Positions 1 to 26 are cleaved as a signal peptide; that stretch reads MDLWPGAWMLLLLLFLLLLFLLPTLW. Topologically, residues 27–37 are lumenal; sequence FCSPSAKYFFK. A helical membrane pass occupies residues 38–58; sequence MAFYNGWILFLAVLAIPVCAV. Topologically, residues 59–127 are cytoplasmic; the sequence is RGRNVENMKI…PGRCVPIAKR (69 aa). An HXXXXD motif motif is present at residues 104-109; the sequence is HQSSLD. A helical transmembrane segment spans residues 128–148; the sequence is ELLWAGSAGLACWLAGVIFID. The Lumenal portion of the chain corresponds to 149–283; sequence RKRTGDAISV…DYLKKPGGGG (135 aa). The EGTR motif signature appears at 178 to 181; that stretch reads EGTR.

Belongs to the 1-acyl-sn-glycerol-3-phosphate acyltransferase family. Widely expressed. Expressed in adipose tissue and at high levels in testis and pancreas. Expressed at lower levels in tissues such as heart, brain, placenta, kidney, lung, spleen, thymus, prostate, ovary, intestine, colon, leukocyte and liver.

Its subcellular location is the endoplasmic reticulum membrane. It catalyses the reaction a 1-acyl-sn-glycero-3-phosphate + an acyl-CoA = a 1,2-diacyl-sn-glycero-3-phosphate + CoA. The enzyme catalyses 1-(9Z-octadecenoyl)-sn-glycero-3-phosphate + (9Z)-octadecenoyl-CoA = 1,2-di-(9Z-octadecenoyl)-sn-glycero-3-phosphate + CoA. The catalysed reaction is 1-(9Z-octadecenoyl)-sn-glycero-3-phosphate + hexadecanoyl-CoA = 1-(9Z)-octadecenoyl-2-hexadecanoyl-sn-glycero-3-phosphate + CoA. It carries out the reaction heptadecanoyl-CoA + 1-(9Z-octadecenoyl)-sn-glycero-3-phosphate = 1-(9Z)-octadecenoyl-2-heptadecanoyl-sn-glycero-3-phosphate + CoA. It catalyses the reaction 1-(9Z-octadecenoyl)-sn-glycero-3-phosphate + octadecanoyl-CoA = 1-(9Z-octadecenoyl)-2-octadecanoyl-sn-glycero-3-phosphate + CoA. The enzyme catalyses 1-(9Z-octadecenoyl)-sn-glycero-3-phosphate + (9Z,12Z)-octadecadienoyl-CoA = 1-(9Z)-octadecenoyl-2-(9Z,12Z)-octadecadienoyl-sn-glycero-3-phosphate + CoA. The catalysed reaction is 1-(9Z-octadecenoyl)-sn-glycero-3-phosphate + tetradecanoyl-CoA = 1-(9Z)-octadecenoyl-2-tetradecanoyl-sn-glycero-3-phosphate + CoA. It carries out the reaction pentadecanoyl-CoA + 1-(9Z-octadecenoyl)-sn-glycero-3-phosphate = 1-(9Z)-octadecenoyl-2-pentadecanoyl-sn-glycero-3-phosphate + CoA. It catalyses the reaction 1-hexadecanoyl-sn-glycero-3-phosphate + (9Z)-octadecenoyl-CoA = 1-hexadecanoyl-2-(9Z-octadecenoyl)-sn-glycero-3-phosphate + CoA. The enzyme catalyses 1-(9Z,12Z,15Z)-octadecatrienoyl-sn-glycero-3-phosphate + (9Z)-octadecenoyl-CoA = 1-(9Z,12Z,15Z)-octadecatrienoyl-2-(9Z)-octadecenoyl-sn-glycero-3-phosphate + CoA. The catalysed reaction is 1-(6Z,9Z,12Z-octadecatrienoyl)-sn-glycero-3-phosphate + (9Z)-octadecenoyl-CoA = (6Z,9Z,12Z)-octadecatrienoyl-2-(9Z)-octadecenoyl-sn-glycero-3-phosphate + CoA. It carries out the reaction 1-eicosanoyl-sn-glycero-3-phosphate + (9Z)-octadecenoyl-CoA = 1-eicosanoyl-2-(9Z)-octadecenoyl-sn-glycero-3-phosphate + CoA. It catalyses the reaction 1-tetradecanoyl-sn-glycerol 3-phosphate + (9Z)-octadecenoyl-CoA = 1-tetradecanoyl-2-(9Z)-octadecenoyl-sn-glycero-3-phosphate + CoA. The enzyme catalyses 1-(9Z-octadecenoyl)-sn-glycero-3-phosphate + (5Z,8Z,11Z,14Z)-eicosatetraenoyl-CoA = 1-(9Z)-octadecenoyl-2-(5Z,8Z,11Z,14Z)-eicosatetraenoyl-sn-glycero-3-phosphate + CoA. The catalysed reaction is 1-(9Z-octadecenoyl)-sn-glycero-3-phosphate + dodecanoyl-CoA = 1-(9Z)-octadecenoyl-2-dodecanoyl-sn-glycero-3-phosphate + CoA. It carries out the reaction (6Z)-octadecenoyl-CoA + 1-(9Z-octadecenoyl)-sn-glycero-3-phosphate = 1-(9Z)-octadecenoyl-2-(6Z)-octadecenoyl-sn-glycero-3-phosphate + CoA. It catalyses the reaction (11Z)-octadecenoyl-CoA + 1-(9Z-octadecenoyl)-sn-glycero-3-phosphate = 1-(9Z)-octadecenoyl-2-(11Z)-octadecenoyl-sn-glycero-3-phosphate + CoA. The enzyme catalyses (9Z)-hexadecenoyl-CoA + 1-(9Z-octadecenoyl)-sn-glycero-3-phosphate = 1-(9Z-octadecenoyl)-2-(9Z-hexadecenoyl)-sn-glycero-3-phosphate + CoA. It participates in phospholipid metabolism; CDP-diacylglycerol biosynthesis; CDP-diacylglycerol from sn-glycerol 3-phosphate: step 2/3. In terms of biological role, converts 1-acyl-sn-glycerol-3-phosphate (lysophosphatidic acid or LPA) into 1,2-diacyl-sn-glycerol-3-phosphate (phosphatidic acid or PA) by incorporating an acyl moiety at the sn-2 position of the glycerol backbone. The chain is 1-acyl-sn-glycerol-3-phosphate acyltransferase alpha (AGPAT1) from Homo sapiens (Human).